Reading from the N-terminus, the 149-residue chain is HMG1/2-like protein (149 aa).

Composition is skewed to basic and acidic residues over residues 1 to 15 (MKGG…KAET) and 35 to 44 (KGKEPKDPNK). 2 disordered regions span residues 1 to 52 (MKGG…PSAF) and 112 to 149 (AYNK…EDDD). Positions 45–114 (PKRPPSAFFV…EYEITLQAYN (70 aa)) form a DNA-binding region, HMG box. The segment covering 134–149 (NDEDEDEEDEEDEDDD) has biased composition (acidic residues).

It belongs to the HMGB family.

Its subcellular location is the nucleus. The protein is HMG1/2-like protein of Vicia faba (Broad bean).